A 156-amino-acid polypeptide reads, in one-letter code: Endogenous retrovirus group K member 24 Pro protein (156 aa).

One can recognise a Peptidase A2 domain in the interval 21 to 96; sequence FEGLVDTGAD…IPLNLWGRDL (76 aa). The active site involves D26. Residues 111–156 form the G-patch domain; that stretch reads YSPTSQKIMTKMGYIPGKGLGKNEDGIKIPFEAKINQKREGIGYPF.

Belongs to the peptidase A2 family. HERV class-II K(HML-2) subfamily. As to quaternary structure, active as a homodimer. Autoproteolytically processed at the N-terminus. Expected C-terminal autoprocessing not detected. The sequence shown is that of the processed Pro protein.

The enzyme catalyses Processing at the authentic HIV-1 PR recognition site and release of the mature p17 matrix and the p24 capsid protein, as a result of the cleavage of the -SQNY-|-PIVQ- cleavage site.. Functionally, retroviral proteases have roles in processing of the primary translation products and the maturation of the viral particle. Endogenous Pro proteins may have kept, lost or modified their original function during evolution. This endogenous protein has retained most of the characteristics of retroviral proteases. The protein is Endogenous retrovirus group K member 24 Pro protein (ERVK-24) of Homo sapiens (Human).